We begin with the raw amino-acid sequence, 255 residues long: Small ribosomal subunit protein uS2 (255 aa).

The protein belongs to the universal ribosomal protein uS2 family.

In Streptococcus thermophilus (strain CNRZ 1066), this protein is Small ribosomal subunit protein uS2.